We begin with the raw amino-acid sequence, 278 residues long: Mediator of RNA polymerase II transcription subunit 4 (278 aa).

Residues 57 to 88 (HARILTLRAQVEALEEQKKSSVTALATLRHEL) are a coiled coil. Disordered regions lie at residues 120–181 (VPPT…EEEE) and 240–278 (VEAP…DLDD). Basic and acidic residues-rich tracts occupy residues 124–142 (YRER…KDDA) and 160–172 (DAPK…DNKP). Low complexity predominate over residues 250 to 268 (AEPVQAQAPRPARPAQPQA).

This sequence belongs to the Mediator complex subunit 4 family. Component of the Mediator complex.

It localises to the nucleus. Functionally, component of the Mediator complex, a coactivator involved in the regulated transcription of nearly all RNA polymerase II-dependent genes. Mediator functions as a bridge to convey information from gene-specific regulatory proteins to the basal RNA polymerase II transcription machinery. Mediator is recruited to promoters by direct interactions with regulatory proteins and serves as a scaffold for the assembly of a functional preinitiation complex with RNA polymerase II and the general transcription factors. The polypeptide is Mediator of RNA polymerase II transcription subunit 4 (MED4) (Phaeosphaeria nodorum (strain SN15 / ATCC MYA-4574 / FGSC 10173) (Glume blotch fungus)).